A 71-amino-acid chain; its full sequence is Beta-defensin 10 (71 aa).

Residues 1–23 form the signal peptide; it reads MKTLCSLLLIGCLLFSYDTPVVG. 3 disulfides stabilise this stretch: Cys37–Cys66, Cys44–Cys59, and Cys49–Cys67.

Belongs to the beta-defensin family.

It is found in the secreted. In terms of biological role, has antibacterial activity. In Rattus norvegicus (Rat), this protein is Beta-defensin 10 (Defb10).